Reading from the N-terminus, the 944-residue chain is MTQLASSYDPSSFESRLYAQWESAGHFKPSGSGEPYTVLLPPPNVTGTLHMGHAFQQTLMDALVRYHRMRGYDTLWQVGTDHAGIATEMVVSRNLALEGKGETRDTLGREGFIAKVWEWKAQSGDTIERQMRRLGTSSDWSRSTFTMDPQPSAAVTEAFVRWYEQGLIYRGQRLVNWDPVLKTAISDLEVENVEEDGFLWSIRYPLADGVTYEHVEHDADGVETLRETRDYLVVATTRPETMLGDTAVMVHPDDARYATLHAAQIVLPLTGRLVPVITDDYVDRAFGTGVVKVTPAHDFNDYQVGVRHDLPLINLFTVTAAINDNAPERYRGLDRYDARKLVLSELEDLGLLVETKPHKLQVPRGDRTGQVIEPYLTDQWFVKMDALAKRGLELVESGQVKFVPPNWINTYRHWMENIQDWCISRQLWWGHRIPAWFDEAGKCYVGHDEAQVRATHGLGAEVALHQDSDVLETWFSSQLWPFSTLGWPDAQAMDERGFARYLPSSVLVTGFDIIFFWVARMIMATDSFTGQVPFRDVYITGLIRDAQGQKMSKSKGNVLDPLDIIDGISIEDLVAKRTSGLMQPRMAEKIEKATRKEFPDGIIAHGADALRFTIAALATHGRDIKFDLGRAEGYKNFCNKLWNATRFALMNTEGAQFSGVPQPQTETERWILARLDAVAAEAQAHYANYRFDLLAQTLYEFAWNAFCDWFVELAKPALNGAVQDAADSTRHTLLYVLEALLRLLHPLTPFVTEELWQQVAPRLGITGDTISLQAFPQRGDVDTSGYAGAEADIEWLKAMVSALRRVRSELNVPPSKQVRLWLQAGSSDDRARVARFASQLAFLLKLEAIDWLAAGQEAPPAAAAIVGELTLLVPLEGLVDMDAERTRLDKEIKRVENEIGKCNGKLGNATFVQNAPAAVVEQERARLNDWTTQLTGLREQRAKL.

Positions 43–53 (PNVTGTLHMGH) match the 'HIGH' region motif. Positions 550-554 (KMSKS) match the 'KMSKS' region motif. Lysine 553 provides a ligand contact to ATP. A coiled-coil region spans residues 878–944 (LVDMDAERTR…TGLREQRAKL (67 aa)).

This sequence belongs to the class-I aminoacyl-tRNA synthetase family. ValS type 1 subfamily. As to quaternary structure, monomer.

The protein resides in the cytoplasm. The catalysed reaction is tRNA(Val) + L-valine + ATP = L-valyl-tRNA(Val) + AMP + diphosphate. Catalyzes the attachment of valine to tRNA(Val). As ValRS can inadvertently accommodate and process structurally similar amino acids such as threonine, to avoid such errors, it has a 'posttransfer' editing activity that hydrolyzes mischarged Thr-tRNA(Val) in a tRNA-dependent manner. The sequence is that of Valine--tRNA ligase from Xanthomonas campestris pv. campestris (strain 8004).